Reading from the N-terminus, the 277-residue chain is Alpha-ketoglutarate-dependent dioxygenase tstK (277 aa).

This sequence belongs to the asaB hydroxylase/desaturase family.

It catalyses the reaction 2-[(1R,8S,14R,15R)-11-hydroxy-14,15-bis[(6E)-oct-6-en-1-yl]-3,5,9-trioxo-4,10-dioxatetracyclo[9.4.0.0(2,6).0(8,12)]pentadeca-2(6),12-dien-8-yl]acetate + 3 2-oxoglutarate + 3 O2 = phomoidride A + 3 succinate + 3 CO2 + H2O. Alpha-ketoglutarate-dependent dioxygenase; part of the gene cluster that mediates the biosynthesis of the antihypercholesterolemic agents phomoidrides which are dimeric anhydrides. Within the pathway, tstK is responsible for the iterative oxidation necessary to convert prephomoidride to phomoidride A. The pathway begins with the highly reducing polyketide synthase tstiA that catalyzes the formation of a C12-fatty acyl-ACP, starting from one acetate and 5 malonate units. The hydrolase tstM is involved in the release of the C12-fatty acyl chain from phiA. The alkylcitrate synthase (ACS) tstJ and the alkylcitrate dehydratase (ACDH) tstI then give rise to decarboxylated monomeric anhydrides by coupling the C12-fatty acyl chain with oxalacetic acid. The cyclase tstC is responsible for the dimerization of the monomeric anhydrides which leads to the production of prephomoidride that contains the characteristic bicyclo[4.3.1]deca-1,6-diene system of phomoidrides. Iterative oxidation catalyzed by the alpha-ketoglutarate-dependent dioxygenase tstK produced then phomoidride A. Finally, the methyltransferase tstE converts phomoidride A to phomoidride B via an acetalization reaction. The phosphatidylethanolamine-binding protein tstB and tstN are not essential for dimerization and their functions have still to be determined. In Talaromyces stipitatus (strain ATCC 10500 / CBS 375.48 / QM 6759 / NRRL 1006) (Penicillium stipitatum), this protein is Alpha-ketoglutarate-dependent dioxygenase tstK.